We begin with the raw amino-acid sequence, 446 residues long: O-antigen polymerase (446 aa).

The next 11 membrane-spanning stretches (helical) occupy residues 11–31 (ICSY…VINE), 33–53 (FCEI…VIII), 58–78 (QGGF…FILI), 104–124 (IYVF…VLLY), 147–167 (QLSM…IKSY), 186–206 (LYDE…SLLF), 211–231 (NFIL…LVGL), 252–272 (LKIK…SLFL), 355–375 (IYLG…SLAF), 391–411 (KLAY…IYFA), and 415–435 (LFDF…LSIV).

The protein resides in the cell inner membrane. It carries out the reaction n lipid-linked O-antigen repeat units = a lipid-linked O antigen + (n-1) polyisoprenyl diphosphate.. It participates in bacterial outer membrane biogenesis; LPS O-antigen biosynthesis. Functionally, polymerase involved in the biosynthesis of the lipopolysaccharide (LPS). Catalyzes the polymerization of the O-antigen repeat units on the periplasmic face of the inner membrane, leading to the formation of the lipid-linked O-antigen molecule. In vitro, shows a preference for bacteria-based, undecaprenyl-containing substrates rather than eukaryote-based, dolichol-containing substrates. This is O-antigen polymerase from Escherichia coli.